The sequence spans 329 residues: tRNA pseudouridine synthase B (329 aa).

The active-site Nucleophile is Asp42.

Belongs to the pseudouridine synthase TruB family. Type 1 subfamily.

The catalysed reaction is uridine(55) in tRNA = pseudouridine(55) in tRNA. Responsible for synthesis of pseudouridine from uracil-55 in the psi GC loop of transfer RNAs. This Lactococcus lactis subsp. lactis (strain IL1403) (Streptococcus lactis) protein is tRNA pseudouridine synthase B.